Reading from the N-terminus, the 153-residue chain is 3-hydroxyacyl-[acyl-carrier-protein] dehydratase FabZ (153 aa).

Histidine 52 is a catalytic residue.

It belongs to the thioester dehydratase family. FabZ subfamily.

It is found in the cytoplasm. It carries out the reaction a (3R)-hydroxyacyl-[ACP] = a (2E)-enoyl-[ACP] + H2O. Functionally, involved in unsaturated fatty acids biosynthesis. Catalyzes the dehydration of short chain beta-hydroxyacyl-ACPs and long chain saturated and unsaturated beta-hydroxyacyl-ACPs. This Magnetococcus marinus (strain ATCC BAA-1437 / JCM 17883 / MC-1) protein is 3-hydroxyacyl-[acyl-carrier-protein] dehydratase FabZ.